Here is a 105-residue protein sequence, read N- to C-terminus: Nucleoid-associated protein ABC0038 (105 aa).

Positions 1 to 22 (MEMKNMGNMMKQMQKMQKQMMK) are enriched in low complexity. A disordered region spans residues 1–26 (MEMKNMGNMMKQMQKMQKQMMKAQEE).

The protein belongs to the YbaB/EbfC family. In terms of assembly, homodimer.

Its subcellular location is the cytoplasm. It localises to the nucleoid. Its function is as follows. Binds to DNA and alters its conformation. May be involved in regulation of gene expression, nucleoid organization and DNA protection. The protein is Nucleoid-associated protein ABC0038 of Shouchella clausii (strain KSM-K16) (Alkalihalobacillus clausii).